The sequence spans 295 residues: Acetylglutamate kinase (295 aa).

Substrate contacts are provided by residues 66–67 (GG), Arg88, and Asn193.

Belongs to the acetylglutamate kinase family. ArgB subfamily.

It localises to the cytoplasm. It catalyses the reaction N-acetyl-L-glutamate + ATP = N-acetyl-L-glutamyl 5-phosphate + ADP. The protein operates within amino-acid biosynthesis; L-arginine biosynthesis; N(2)-acetyl-L-ornithine from L-glutamate: step 2/4. Functionally, catalyzes the ATP-dependent phosphorylation of N-acetyl-L-glutamate. The polypeptide is Acetylglutamate kinase (Gluconobacter oxydans (strain 621H) (Gluconobacter suboxydans)).